The sequence spans 603 residues: Trihelix transcription factor DF1 (603 aa).

A Myb-like 1 domain is found at 60 to 118; sequence NRWPRQETLALLKIRSDMGIAFRDASVKGPLWEEVSRKMAEHGYIRNAKKCKEKFENVY. 4 disordered regions span residues 149–201, 220–249, 333–408, and 532–603; these read QSTT…SSIP, LSDN…TRKK, KQPN…SSSR, and QWPP…TNNL. 4 stretches are compositionally biased toward low complexity: residues 168 to 178, 189 to 198, 221 to 236, and 344 to 362; these read NNNNNNNNNNN, TTVMPTLPSS, SDNS…TSSD, and PQQV…QQPP. Over residues 363 to 376 the composition is skewed to pro residues; sequence QRSPPPQPPAPLPQ. The segment covering 381–408 has biased composition (polar residues); the sequence is VVSTLDTTKTDNGGDQNMTPAASASSSR. The Myb-like 2 domain maps to 401-465; sequence AASASSSRWP…RCKEKWENIN (65 aa). Residues 532–555 are compositionally biased toward low complexity; the sequence is QWPPAVTTATTTPAAAQPDQQSQP. Residues 559-586 show a composition bias toward acidic residues; sequence NFDDEEGTDEEYDDEDEEEENEEEEGGE. The segment covering 593–603 has biased composition (low complexity); it reads NNNNNKTTNNL.

It is found in the nucleus. In terms of biological role, transcription repressor that negatively regulates root hair growth by directly binding RSL4 promoter and repressing RSL4 expression. Required for the synthesis of seed coat mucilage. The chain is Trihelix transcription factor DF1 from Arabidopsis thaliana (Mouse-ear cress).